Reading from the N-terminus, the 327-residue chain is MAEGLVLKGTMRAHTDMVTAIATPIDNSDTIVSASRDKSIIVWKLTKDDKSYGVRQRRLTGHSHFVEDVVLSSDGQFALSGSWDGELRLWDLAAGVSTRRFVGHTKDVLSVAFSLDNRQIVSASRDRTIKLWNTLGECKYTISEGGEGHRDWVSCVRFSPNTLQPTIVSASCDKTVKVWNLSNCKLRSTLAGHTGYVSTVAVSPDGSLCASGGKDGVVLLWDLAEGKKLYSLEANSVIHALCFTPNRYWLCAATEQGIKIWDLESKTVVEDLKVDLKAEAEKSDGSGTAATKRKVIYCTSLNWSADGSTLFSGYTDGVIRVWGIGRY.

WD repeat units follow at residues 13-44 (AHTD…IVWK), 61-91 (GHSH…RLWD), 103-133 (GHTK…KLWN), 148-180 (GHRD…KVWN), 192-222 (GHTG…LLWD), 233-262 (EANS…KIWD), and 293-323 (RKVI…RVWG).

The protein belongs to the WD repeat G protein beta family. Ribosomal protein RACK1 subfamily.

This chain is Small ribosomal subunit protein RACK1 (GB1), found in Brassica napus (Rape).